Here is a 159-residue protein sequence, read N- to C-terminus: Peptide methionine sulfoxide reductase MsrB (159 aa).

The 124-residue stretch at 14 to 137 (TEKLKENLTE…NSASLKFIAK (124 aa)) folds into the MsrB domain. Cysteine 126 functions as the Nucleophile in the catalytic mechanism.

Belongs to the MsrB Met sulfoxide reductase family.

The enzyme catalyses L-methionyl-[protein] + [thioredoxin]-disulfide + H2O = L-methionyl-(R)-S-oxide-[protein] + [thioredoxin]-dithiol. The chain is Peptide methionine sulfoxide reductase MsrB from Hathewaya histolytica (Clostridium histolyticum).